Reading from the N-terminus, the 803-residue chain is Elongation factor G, mitochondrial (803 aa).

A mitochondrion-targeting transit peptide spans Met1 to Pro24. The tr-type G domain maps to Ser102–Ser388. GTP contacts are provided by residues Ala111–Thr118, Asp186–His190, and Asn240–Asp243.

Belongs to the TRAFAC class translation factor GTPase superfamily. Classic translation factor GTPase family. EF-G/EF-2 subfamily.

Its subcellular location is the mitochondrion. It participates in protein biosynthesis; polypeptide chain elongation. Its function is as follows. Mitochondrial GTPase that catalyzes the GTP-dependent ribosomal translocation step during translation elongation. During this step, the ribosome changes from the pre-translocational (PRE) to the post-translocational (POST) state as the newly formed A-site-bound peptidyl-tRNA and P-site-bound deacylated tRNA move to the P and E sites, respectively. Catalyzes the coordinated movement of the two tRNA molecules, the mRNA and conformational changes in the ribosome. The protein is Elongation factor G, mitochondrial (mef1) of Talaromyces marneffei (strain ATCC 18224 / CBS 334.59 / QM 7333) (Penicillium marneffei).